A 581-amino-acid polypeptide reads, in one-letter code: Serine/threonine-protein kinase PINK1, mitochondrial (581 aa).

The N-terminal 77 residues, 1 to 77 (MAVRQALGRG…RFFRQSVAGL (77 aa)), are a transit peptide targeting the mitochondrion. Residues 78–93 (AARLQRQFVVRAWGCA) are Mitochondrial intermembrane-facing. The chain crosses the membrane as a helical span at residues 94–110 (GPCGRAVFLAFGLGLGL). The tract at residues 111–117 (IEEKQAE) is required for outer membrane localization. At 111 to 581 (IEEKQAESRR…LLLCSWRAAL (471 aa)) the chain is on the cytoplasmic side. Positions 156–511 (YLIGQSIGKG…VAANVLHLSL (356 aa)) constitute a Protein kinase domain. ATP is bound by residues 162-170 (IGKGCSAAV) and Lys-186. Residues 189–208 (GLLPGRGPGTSAPGEGQERA) form a disordered region. A Phosphoserine; by autocatalysis modification is found at Ser-228. Asp-362 acts as the Proton acceptor in catalysis. Ser-402 carries the phosphoserine; by autocatalysis modification.

Belongs to the protein kinase superfamily. Ser/Thr protein kinase family. In terms of assembly, upon mitochondrial depolarization, it forms a supercomplex with TOM and TIM23 complexes. PINK1-TOM-TIM23 supercomplex formation requires PINK1 interaction with TOMM20 and TOMM70 and is critical for PINK1 stabilization at the outer mitochondrial membrane, kinase activation and downstream mitophagy. Upon mitochondrial depolarization, interacts with TIMM23; the interaction is required for PINK1 accumulation at the outer mitochondrial membrane, kinase activation by autophosphorylation and PRKN recruitement to mitochondria. Interacts with PRKN. Interacts with FBXO7. Forms a complex with PRKN and PARK7. Interacts with NENF. Mg(2+) is required as a cofactor. Post-translationally, proteolytically cleaved. In healthy cells, the precursor is continuously imported into the inner mitochondrial membrane (IMM), where it is proteolytically cleaved by mitochondrial-processing peptidase (MPP) and then undergoes further proteolytic cleavage by PARL or AFG3L2 to give rise to the 52 kDa short form. The 52 kDa short form is then released into the cytosol where it rapidly undergoes proteasome-dependent degradation. In unhealthy cells, when cellular stress conditions lead to the loss of mitochondrial membrane potential, mitochondrial import is impaired leading to the precursor accumulating on the outer mitochondrial membrane (OMM). If accumulation at the OMM fails and it is imported into the depolarized mitochondria, it undergoes cleavage by the IMM protease OMA1, promoting its subsequent degradation by the proteasome. In terms of processing, autophosphorylated. Loss of mitochondrial membrane potential results in the precursor accumulating on the outer mitochondrial membrane (OMM) where it is activated by autophosphorylation. Autophosphorylation at Ser-228 and Ser-402 is sufficient and essential for selective recruitment of PRKN to depolarized mitochondria, via PINK1-dependent phosphorylation of ubiquitin and maybe PRKN. Highly expressed in heart, skeletal muscle and testis, and at lower levels in brain, placenta, liver, kidney, pancreas, prostate, ovary and small intestine. Present in the embryonic testis from an early stage of development.

It localises to the mitochondrion outer membrane. The protein resides in the mitochondrion inner membrane. The protein localises to the cytoplasm. Its subcellular location is the cytosol. The enzyme catalyses L-seryl-[protein] + ATP = O-phospho-L-seryl-[protein] + ADP + H(+). The catalysed reaction is L-threonyl-[protein] + ATP = O-phospho-L-threonyl-[protein] + ADP + H(+). Functionally, serine/threonine-protein kinase which acts as a sensor of mitochondrial damage and protects against mitochondrial dysfunction during cellular stress. It phosphorylates mitochondrial proteins to coordinate mitochondrial quality control mechanisms that remove and replace dysfunctional mitochondrial components. Depending on the severity of mitochondrial damage, activity ranges from preventing apoptosis and stimulating mitochondrial biogenesis to eliminating severely damaged mitochondria via PINK1-PRKN-dependent mitophagy. When cellular stress results in irreversible mitochondrial damage, PINK1 accumulates at the outer mitochondrial membrane (OMM) where it phosphorylates pre-existing polyubiquitin chains at 'Ser-65', recruits PRKN from the cytosol to the OMM and activates PRKN by phosphorylation at 'Ser-65'; activated PRKN then ubiquinates VDAC1 and other OMM proteins to initiate mitophagy. The PINK1-PRKN pathway also promotes fission of damaged mitochondria through phosphorylation and PRKN-dependent degradation of mitochondrial proteins involved in fission such as MFN2. This prevents the refusion of unhealthy mitochondria with the mitochondrial network or initiates mitochondrial fragmentation facilitating their later engulfment by autophagosomes. Also promotes mitochondrial fission independently of PRKN and ATG7-mediated mitophagy, via the phosphorylation and activation of DNM1L. Regulates motility of damaged mitochondria by promoting the ubiquitination and subsequent degradation of MIRO1 and MIRO2; in motor neurons, this likely inhibits mitochondrial intracellular anterograde transport along the axons which probably increases the chance of the mitochondria undergoing mitophagy in the soma. Required for ubiquinone reduction by mitochondrial complex I by mediating phosphorylation of complex I subunit NDUFA10. Phosphorylates LETM1, positively regulating its mitochondrial calcium transport activity. The chain is Serine/threonine-protein kinase PINK1, mitochondrial (PINK1) from Homo sapiens (Human).